The following is a 118-amino-acid chain: Small ribosomal subunit protein uS13 (118 aa).

Residues 94–118 form a disordered region; that stretch reads SLPVRGQRSKTNARTRKGPRKAIKK.

Belongs to the universal ribosomal protein uS13 family. As to quaternary structure, part of the 30S ribosomal subunit. Forms a loose heterodimer with protein S19. Forms two bridges to the 50S subunit in the 70S ribosome.

Functionally, located at the top of the head of the 30S subunit, it contacts several helices of the 16S rRNA. In the 70S ribosome it contacts the 23S rRNA (bridge B1a) and protein L5 of the 50S subunit (bridge B1b), connecting the 2 subunits; these bridges are implicated in subunit movement. Contacts the tRNAs in the A and P-sites. The protein is Small ribosomal subunit protein uS13 of Psychromonas ingrahamii (strain DSM 17664 / CCUG 51855 / 37).